Here is a 666-residue protein sequence, read N- to C-terminus: Probable potassium transport system protein Kup (666 aa).

A run of 12 helical transmembrane segments spans residues 16–36 (GFII…LYTI), 58–78 (ISLI…LIAL), 100–120 (PWLI…GALT), 141–161 (IYQN…VLFG), 165–185 (FGTG…FSFL), 221–241 (IFIL…YSDL), 253–273 (WPFV…WILA), 294–314 (VYLV…LISG), 343–363 (LYIP…VLAF), 373–393 (YGLA…YYLI), 399–419 (PILA…FFLA), and 424–444 (FMHG…VMFI).

The protein belongs to the HAK/KUP transporter (TC 2.A.72) family.

Its subcellular location is the cell membrane. It catalyses the reaction K(+)(in) + H(+)(in) = K(+)(out) + H(+)(out). Transport of potassium into the cell. Likely operates as a K(+):H(+) symporter. This is Probable potassium transport system protein Kup from Streptococcus pyogenes serotype M1.